Here is a 171-residue protein sequence, read N- to C-terminus: Co-chaperone protein HscB homolog (171 aa).

The J domain maps to 2–74; the sequence is NHFELFGLPP…ISRAEYLLSQ (73 aa).

This sequence belongs to the HscB family. Interacts with HscA and stimulates its ATPase activity.

Co-chaperone involved in the maturation of iron-sulfur cluster-containing proteins. Seems to help targeting proteins to be folded toward HscA. The chain is Co-chaperone protein HscB homolog from Vibrio vulnificus (strain YJ016).